Here is a 201-residue protein sequence, read N- to C-terminus: Translation initiation factor IF-3 (201 aa).

The disordered stretch occupies residues 170–201 (TPKSASKKGHTPPKTQVEASKQANESAETEEE). Over residues 182–195 (PKTQVEASKQANES) the composition is skewed to polar residues.

It belongs to the IF-3 family. Monomer.

Its subcellular location is the cytoplasm. IF-3 binds to the 30S ribosomal subunit and shifts the equilibrium between 70S ribosomes and their 50S and 30S subunits in favor of the free subunits, thus enhancing the availability of 30S subunits on which protein synthesis initiation begins. This Porphyromonas gingivalis (strain ATCC BAA-308 / W83) protein is Translation initiation factor IF-3.